A 91-amino-acid chain; its full sequence is Small ribosomal subunit protein uS7 (91 aa).

The protein belongs to the universal ribosomal protein uS7 family. In terms of assembly, part of the 30S ribosomal subunit. Contacts proteins S9 and S11.

Functionally, one of the primary rRNA binding proteins, it binds directly to 16S rRNA where it nucleates assembly of the head domain of the 30S subunit. Is located at the subunit interface close to the decoding center, probably blocks exit of the E-site tRNA. The polypeptide is Small ribosomal subunit protein uS7 (rpsG) (Apple proliferation phytoplasma).